Here is a 199-residue protein sequence, read N- to C-terminus: Large ribosomal subunit protein uL5 (199 aa).

Belongs to the universal ribosomal protein uL5 family. As to quaternary structure, part of the 50S ribosomal subunit; part of the 5S rRNA/L5/L18/L25 subcomplex. Contacts the 5S rRNA and the P site tRNA. Forms a bridge to the 30S subunit in the 70S ribosome.

In terms of biological role, this is one of the proteins that bind and probably mediate the attachment of the 5S RNA into the large ribosomal subunit, where it forms part of the central protuberance. In the 70S ribosome it contacts protein S13 of the 30S subunit (bridge B1b), connecting the 2 subunits; this bridge is implicated in subunit movement. Contacts the P site tRNA; the 5S rRNA and some of its associated proteins might help stabilize positioning of ribosome-bound tRNAs. In Frankia casuarinae (strain DSM 45818 / CECT 9043 / HFP020203 / CcI3), this protein is Large ribosomal subunit protein uL5.